The sequence spans 464 residues: ATP synthase subunit beta (464 aa).

An ATP-binding site is contributed by 148–155 (GGAGVGKT).

Belongs to the ATPase alpha/beta chains family. F-type ATPases have 2 components, CF(1) - the catalytic core - and CF(0) - the membrane proton channel. CF(1) has five subunits: alpha(3), beta(3), gamma(1), delta(1), epsilon(1). CF(0) has three main subunits: a(1), b(2) and c(9-12). The alpha and beta chains form an alternating ring which encloses part of the gamma chain. CF(1) is attached to CF(0) by a central stalk formed by the gamma and epsilon chains, while a peripheral stalk is formed by the delta and b chains.

Its subcellular location is the cell inner membrane. The catalysed reaction is ATP + H2O + 4 H(+)(in) = ADP + phosphate + 5 H(+)(out). Produces ATP from ADP in the presence of a proton gradient across the membrane. The catalytic sites are hosted primarily by the beta subunits. This is ATP synthase subunit beta from Acinetobacter baylyi (strain ATCC 33305 / BD413 / ADP1).